Here is a 78-residue protein sequence, read N- to C-terminus: High temperature lethal protein 1 (78 aa).

Ser2 carries the post-translational modification N-acetylserine.

In terms of assembly, interacts directly with RSC8. Component of the two forms of the RSC complex composed of at least either RSC1 or RSC2, and ARP7, ARP9, LDB7, NPL6, RSC3, RSC30, RSC4, RSC58, RSC6, RSC8, RSC9, SFH1, STH1, HTL1 and probably RTT102. The complexes interact with histone and histone variant components of centromeric chromatin. Component of a fungal-specific module (HTL1-LDB7-NPL6-RSC3-RSC30) within the RSC complex.

It is found in the nucleus. Its function is as follows. Required for cell cycle progression through G2/M transition at temperatures higher than 33 degrees Celsius. Component of the chromatin structure-remodeling complex (RSC), which is involved in transcription regulation and nucleosome positioning. RSC is responsible for the transfer of a histone octamer from a nucleosome core particle to naked DNA. The reaction requires ATP and involves an activated RSC-nucleosome intermediate. Remodeling reaction also involves DNA translocation, DNA twist and conformational change. As a reconfigurer of centromeric and flanking nucleosomes, RSC complex is required both for proper kinetochore function in chromosome segregation and, via a PKC1-dependent signaling pathway, for organization of the cellular cytoskeleton. When associated with the RSC complex, may act coordinately with PKC1 to regulate G2/M transition. Together with LDB7, NPL6, RSC3, RSC30 components, defines a fungal-specific module within the RSC complex that plays a role in many cellular functions including the maintenance of cell wall integrity. The sequence is that of High temperature lethal protein 1 (HTL1) from Saccharomyces cerevisiae (strain ATCC 204508 / S288c) (Baker's yeast).